Consider the following 161-residue polypeptide: Vasotocin-neurophysin VT (161 aa).

Residues Met-1 to Gly-22 form the signal peptide. Cys-23 and Cys-28 are oxidised to a cystine. Gly-31 carries the post-translational modification Glycine amide. Disulfide bonds link Cys-43-Cys-91, Cys-46-Cys-58, Cys-52-Cys-81, Cys-59-Cys-71, Cys-99-Cys-111, Cys-105-Cys-123, and Cys-112-Cys-117.

This sequence belongs to the vasopressin/oxytocin family.

The protein resides in the secreted. Functionally, vasotocin is an antidiuretic hormone. This chain is Vasotocin-neurophysin VT, found in Eptatretus stoutii (Pacific hagfish).